A 344-amino-acid polypeptide reads, in one-letter code: KRR1 small subunit processome component homolog (344 aa).

The KH domain occupies 126-194 (DIIKIGNLVH…VRDIVLDTMN (69 aa)). Residues 230–246 (KNKNISKRKQPKNKKPK) show a composition bias toward basic residues. Residues 230 to 326 (KNKNISKRKQ…KRAAEDNKVD (97 aa)) are disordered. Residues 271–344 (FLNKEQKQAK…MKANKKKERS (74 aa)) are a coiled coil. The span at 272–303 (LNKEQKQAKRQQERTAKQAEAAKKQDERRNKD) shows a compositional bias: basic and acidic residues.

The protein belongs to the KRR1 family. As to quaternary structure, monomer. Component of the ribosomal small subunit (SSU) processome.

The protein localises to the nucleus. The protein resides in the nucleolus. Required for 40S ribosome biogenesis. Involved in nucleolar processing of pre-18S ribosomal RNA and ribosome assembly. Binds to RNA. Required for female germline development, cell viability during eye development and for survival of dividing cells and epithelial cells during early wing disk development. This Drosophila mojavensis (Fruit fly) protein is KRR1 small subunit processome component homolog.